A 363-amino-acid polypeptide reads, in one-letter code: 3-dehydroquinate synthase (363 aa).

NAD(+) contacts are provided by residues 107–111 (GVIGD), 131–132 (TT), Lys-144, and Lys-153. Zn(2+)-binding residues include Glu-186, His-251, and His-268.

This sequence belongs to the sugar phosphate cyclases superfamily. Dehydroquinate synthase family. The cofactor is Co(2+). Zn(2+) is required as a cofactor. Requires NAD(+) as cofactor.

It localises to the cytoplasm. The catalysed reaction is 7-phospho-2-dehydro-3-deoxy-D-arabino-heptonate = 3-dehydroquinate + phosphate. It functions in the pathway metabolic intermediate biosynthesis; chorismate biosynthesis; chorismate from D-erythrose 4-phosphate and phosphoenolpyruvate: step 2/7. Functionally, catalyzes the conversion of 3-deoxy-D-arabino-heptulosonate 7-phosphate (DAHP) to dehydroquinate (DHQ). The protein is 3-dehydroquinate synthase of Nostoc punctiforme (strain ATCC 29133 / PCC 73102).